A 480-amino-acid polypeptide reads, in one-letter code: Glutamate--tRNA ligase (480 aa).

The 'HIGH' region signature appears at 21-31 (PSPTGYLHVGG). The Zn(2+) site is built by cysteine 110, cysteine 112, cysteine 137, and histidine 139. The short motif at 248–252 (KLSKR) is the 'KMSKS' region element. Lysine 251 contributes to the ATP binding site.

The protein belongs to the class-I aminoacyl-tRNA synthetase family. Glutamate--tRNA ligase type 1 subfamily. In terms of assembly, monomer. Zn(2+) is required as a cofactor.

The protein resides in the cytoplasm. It carries out the reaction tRNA(Glu) + L-glutamate + ATP = L-glutamyl-tRNA(Glu) + AMP + diphosphate. Catalyzes the attachment of glutamate to tRNA(Glu) in a two-step reaction: glutamate is first activated by ATP to form Glu-AMP and then transferred to the acceptor end of tRNA(Glu). The polypeptide is Glutamate--tRNA ligase (Mannheimia succiniciproducens (strain KCTC 0769BP / MBEL55E)).